We begin with the raw amino-acid sequence, 356 residues long: MKDITAMVVVQIATAGLNIFFKLAMEDGMNPSVLVAYRLLFATLFMIPICFIFQRKKRPEFTCRLMLLALLSGLLGVVIPSILTITGLALTSATFTSAAGVLTPLVTFIFAALLRMESVRLGSSVGLAKVFGTLFGVGGALVFIFYRGIEIRLWSTHVNLVNQPRDSSRDATTHHISILGALLVFGGNISISLWFLLQVKISKQFGGPYWNATLMNMMGGVVAMLVALCWEHDLDEWRLGWNIRLLTIAYAAILISGMVVAVNAWCIESRGPLFVSVFSPVGLVIVALVGSFLLDETLHLGSIIGTVIIVGALYIVLWAKNKEMKSMLTTSDHNETNKTSKDITVNNLPTLSTNVP.

A run of 10 helical transmembrane segments spans residues 4–24 (ITAM…FKLA), 33–53 (VLVA…CFIF), 65–85 (LMLL…ILTI), 94–114 (TFTS…AALL), 125–145 (VGLA…VFIF), 176–196 (ISIL…LWFL), 210–230 (WNAT…ALCW), 245–265 (LLTI…VNAW), 273–293 (LFVS…GSFL), and 298–318 (LHLG…IVLW). EamA domains follow at residues 14 to 142 (TAGL…GALV) and 191 to 317 (ISLW…YIVL).

This sequence belongs to the drug/metabolite transporter (DMT) superfamily. Plant drug/metabolite exporter (P-DME) (TC 2.A.7.4) family.

It is found in the membrane. In Arabidopsis thaliana (Mouse-ear cress), this protein is WAT1-related protein At1g68170.